We begin with the raw amino-acid sequence, 324 residues long: Signal peptidase I (324 aa).

Residues 1–3 are Periplasmic-facing; it reads MAN. The helical transmembrane segment at 4–22 threads the bilayer; that stretch reads MFALILVIATLVTGILWCV. The Cytoplasmic segment spans residues 23 to 58; that stretch reads DKFVFAPKRRARQAAAQTASGDALDNATLNKVAPKP. A helical membrane pass occupies residues 59–77; sequence GWLETGASVFPVLAIVLIV. The Periplasmic segment spans residues 78-324; sequence RSFLYEPFQI…VRLSRIGGIH (247 aa). Active-site residues include S91 and K146.

This sequence belongs to the peptidase S26 family.

It localises to the cell inner membrane. The enzyme catalyses Cleavage of hydrophobic, N-terminal signal or leader sequences from secreted and periplasmic proteins.. The polypeptide is Signal peptidase I (lepB) (Salmonella typhi).